Here is a 138-residue protein sequence, read N- to C-terminus: Protein E6 (138 aa).

2 zinc fingers span residues 25–61 and 98–134; these read CNFCTGFLTYQELLEFDYKDFNLLWKDGFVFGCCAAC and CLICLKRLDLLEKLDICAQHREFHRVRNRWKGVCRHC.

It belongs to the papillomaviridae E6 protein family. In terms of assembly, forms homodimers. Interacts with ubiquitin-protein ligase UBE3A/E6-AP; this interaction stimulates UBE3A ubiquitin activity. Interacts with host BAK1.

The protein localises to the host cytoplasm. Its subcellular location is the host nucleus. Plays a major role in the induction and maintenance of cellular transformation. E6 associates with host UBE3A/E6-AP ubiquitin-protein ligase and modulates its activity. Protects host keratinocytes from apoptosis by mediating the degradation of host BAK1. May also inhibit host immune response. This is Protein E6 from Homo sapiens (Human).